A 340-amino-acid chain; its full sequence is Glycerol-3-phosphate dehydrogenase [NAD(P)+] (340 aa).

Residues Ser-13, Trp-14, and Lys-108 each coordinate NADPH. Residues Lys-108, Gly-139, and Ser-141 each coordinate sn-glycerol 3-phosphate. NADPH is bound at residue Ala-143. Sn-glycerol 3-phosphate-binding residues include Lys-194, Asp-247, Ser-257, Arg-258, and Asn-259. Residue Lys-194 is the Proton acceptor of the active site. Arg-258 serves as a coordination point for NADPH. NADPH-binding residues include Val-282 and Glu-284.

The protein belongs to the NAD-dependent glycerol-3-phosphate dehydrogenase family.

The protein localises to the cytoplasm. It catalyses the reaction sn-glycerol 3-phosphate + NAD(+) = dihydroxyacetone phosphate + NADH + H(+). The catalysed reaction is sn-glycerol 3-phosphate + NADP(+) = dihydroxyacetone phosphate + NADPH + H(+). It participates in membrane lipid metabolism; glycerophospholipid metabolism. Its function is as follows. Catalyzes the reduction of the glycolytic intermediate dihydroxyacetone phosphate (DHAP) to sn-glycerol 3-phosphate (G3P), the key precursor for phospholipid synthesis. This is Glycerol-3-phosphate dehydrogenase [NAD(P)+] from Streptococcus sanguinis (strain SK36).